The sequence spans 361 residues: MNINDTVERVTDGADLTVDEAREAARLVFEEATEAQIGALLAALRAKGETEAEIAGFAQGMRDAARTIEPDREPLVDTCGTGGDDYDTINVSTTAAIVAAGAGVPIAKHGNYSVSSSSGSADVLEVAGADVEAEPPAVEEAIETDGIGFMLAPVFHPAMKAVIGPRKELGMRTIFNVLGPLTNPAGADAQVLGVYDPDLVGTIARSLAHMPVEHALVVHGAGMDEIGIHDETVAAEVDGDEVREFTIAPEDLGLDRAPIEAVSGGTPEENAADLRGIVDGSVTGPKRDLILANAGAAIYVAGETDTLAAGVERAAEAIDSGAAATKFAALCGDDEAVEGDGEAASTDSAAASTTAGPEDDD.

5-phospho-alpha-D-ribose 1-diphosphate is bound by residues G80, G83 to D84, T88, N90 to T93, K108 to S116, and S120. Anthranilate is bound at residue G80. S92 contributes to the Mg(2+) binding site. Residue N111 coordinates anthranilate. Position 166 (R166) interacts with anthranilate. Mg(2+) is bound by residues D224 and E225. A disordered region spans residues E338–D361. Low complexity predominate over residues A343–A355.

This sequence belongs to the anthranilate phosphoribosyltransferase family. Homodimer. It depends on Mg(2+) as a cofactor.

The enzyme catalyses N-(5-phospho-beta-D-ribosyl)anthranilate + diphosphate = 5-phospho-alpha-D-ribose 1-diphosphate + anthranilate. The protein operates within amino-acid biosynthesis; L-tryptophan biosynthesis; L-tryptophan from chorismate: step 2/5. Its function is as follows. Catalyzes the transfer of the phosphoribosyl group of 5-phosphorylribose-1-pyrophosphate (PRPP) to anthranilate to yield N-(5'-phosphoribosyl)-anthranilate (PRA). The polypeptide is Anthranilate phosphoribosyltransferase (Halorubrum lacusprofundi (strain ATCC 49239 / DSM 5036 / JCM 8891 / ACAM 34)).